The chain runs to 357 residues: Phenylalanine--tRNA ligase alpha subunit (357 aa).

Residue E257 coordinates Mg(2+).

It belongs to the class-II aminoacyl-tRNA synthetase family. Phe-tRNA synthetase alpha subunit type 1 subfamily. In terms of assembly, tetramer of two alpha and two beta subunits. The cofactor is Mg(2+).

It is found in the cytoplasm. The catalysed reaction is tRNA(Phe) + L-phenylalanine + ATP = L-phenylalanyl-tRNA(Phe) + AMP + diphosphate + H(+). This chain is Phenylalanine--tRNA ligase alpha subunit, found in Ruegeria pomeroyi (strain ATCC 700808 / DSM 15171 / DSS-3) (Silicibacter pomeroyi).